The sequence spans 160 residues: UPF0262 protein ELI_10965 (160 aa).

Belongs to the UPF0262 family.

The sequence is that of UPF0262 protein ELI_10965 from Erythrobacter litoralis (strain HTCC2594).